We begin with the raw amino-acid sequence, 370 residues long: tRNA-specific 2-thiouridylase MnmA (370 aa).

ATP-binding positions include 25–32 (ALSGGVDS) and L51. The active-site Nucleophile is C112. C112 and C211 are joined by a disulfide. G137 lines the ATP pocket. Residues 161–163 (KDQ) form an interaction with tRNA region. C211 acts as the Cysteine persulfide intermediate in catalysis. Residues 316–317 (RY) form an interaction with tRNA region.

The protein belongs to the MnmA/TRMU family.

The protein localises to the cytoplasm. It catalyses the reaction S-sulfanyl-L-cysteinyl-[protein] + uridine(34) in tRNA + AH2 + ATP = 2-thiouridine(34) in tRNA + L-cysteinyl-[protein] + A + AMP + diphosphate + H(+). Functionally, catalyzes the 2-thiolation of uridine at the wobble position (U34) of tRNA, leading to the formation of s(2)U34. This chain is tRNA-specific 2-thiouridylase MnmA, found in Synechococcus sp. (strain JA-3-3Ab) (Cyanobacteria bacterium Yellowstone A-Prime).